We begin with the raw amino-acid sequence, 614 residues long: V-type proton ATPase catalytic subunit A isoform 2 (614 aa).

S142 bears the Phosphoserine mark. 247–254 contacts ATP; it reads GAFGCGKT.

It belongs to the ATPase alpha/beta chains family. In terms of assembly, V-ATPase is a heteromultimeric enzyme made up of two complexes: the ATP-hydrolytic V1 complex and the proton translocation V0 complex. The V1 complex consists of three catalytic AB heterodimers that form a heterohexamer, three peripheral stalks each consisting of EG heterodimers, one central rotor including subunits D and F, and the regulatory subunits C and H. The proton translocation complex V0 consists of the proton transport subunit a, a ring of proteolipid subunits c9c'', rotary subunit d, subunits e and f, and the accessory subunits VhaAC45 and ATP6AP2.

The catalysed reaction is ATP + H2O + 4 H(+)(in) = ADP + phosphate + 5 H(+)(out). With respect to regulation, ATP hydrolysis occurs at the interface between the nucleotide-binding domains of subunits A and B. ATP hydrolysis triggers a conformational change in the subunits D and F, which induces a shift of subunit d. The c-ring is subsequently rotated and results in a continuous proton translocation across the membrane. Functionally, catalytic subunit of the V1 complex of vacuolar(H+)-ATPase (V-ATPase), a multisubunit enzyme composed of a peripheral complex (V1) that hydrolyzes ATP and a membrane integral complex (V0) that translocates protons. V-ATPase is responsible for acidifying and maintaining the pH of intracellular compartments and in some cell types, is targeted to the plasma membrane, where it is responsible for acidifying the extracellular environment. This Drosophila melanogaster (Fruit fly) protein is V-type proton ATPase catalytic subunit A isoform 2 (Vha68-2).